Consider the following 444-residue polypeptide: Xylose isomerase (444 aa).

Active-site residues include His-101 and Asp-104. The Mg(2+) site is built by Glu-232, Glu-268, His-271, Asp-296, Asp-307, Asp-309, and Asp-339.

The protein belongs to the xylose isomerase family. As to quaternary structure, homotetramer. Mg(2+) serves as cofactor.

It localises to the cytoplasm. It carries out the reaction alpha-D-xylose = alpha-D-xylulofuranose. The chain is Xylose isomerase from Thermotoga sp. (strain RQ2).